The primary structure comprises 478 residues: MDVHLGNWRLCGRRCGRLAHVVLPEAFLDRHGLAEDAGAEFFVQTRFTGSLRPSSYVRVIGAFFGGGSGDEIARRDRRSALNLVLSLPLLADGDGRYDPHNIATLKVRSGDGRRLVFVDFFYLSLLGAQMPRGPESEGEGGKDGGAGRGDGEASRESPLERIAAEASGPGPGSGRGRSAGGRRASPLSVLSGLLDNKYTQIAKHHRALEDPGAVRGVNIEPDRRDHGNLAGVGKRKVRCALNLIDLKRDDITFTSSTHLLSGTRFTLCHYPRPVAPPGGAPWESTLDGLSERQLRGVDPLAALILGFDFLERAQTGLVNSLARECENGGLKIFQRLPVCVEKKHDIRGVLGDHFTEACHVLARQVGESCAWVRACVSGERGHVGLWADFLNLWEAGPSTLGVDLSYLFSPGPPDDESAFWARLLGSDRLLDAIKTGARAVLVVDSQLAAWLLLPGGFAIKGRYSLSREDIQITVGRYG.

The disordered stretch occupies residues 131–184 (PRGPESEGEGGKDGGAGRGDGEASRESPLERIAAEASGPGPGSGRGRSAGGRRA). The segment covering 149–163 (GDGEASRESPLERIA) has biased composition (basic and acidic residues). A compositionally biased stretch (gly residues) spans 169-179 (PGPGSGRGRSA).

Belongs to the herpesviridae CVC1 protein family. In terms of assembly, interacts (via C-terminus) with capsid vertex component 2/CVC2.

The protein localises to the virion. It localises to the host nucleus. In terms of biological role, capsid vertex-specific component that plays a role during viral DNA encapsidation, assuring correct genome cleavage and presumably stabilizing capsids that contain full-length viral genomes. In Equus caballus (Horse), this protein is Capsid vertex component 1.